The following is a 164-amino-acid chain: HTH-type transcriptional regulator IscR (164 aa).

Residues 2-131 enclose the HTH rrf2-type domain; the sequence is RLTSKGRYAV…NNITLDELVN (130 aa). Positions 28–51 form a DNA-binding region, H-T-H motif; the sequence is LADISERQGISLSYLEQLFSRLRK. Cys-92, Cys-98, and Cys-104 together coordinate [2Fe-2S] cluster.

[2Fe-2S] cluster is required as a cofactor.

Functionally, regulates the transcription of several operons and genes involved in the biogenesis of Fe-S clusters and Fe-S-containing proteins. The sequence is that of HTH-type transcriptional regulator IscR from Pectobacterium carotovorum subsp. carotovorum (strain PC1).